The sequence spans 1096 residues: Protein EMBRYONIC FLOWER 1 (1096 aa).

8 disordered regions span residues 155–189 (KARG…EKLN), 274–296 (KTSG…VRGR), 315–348 (GATS…KGKQ), 366–420 (ETSQ…KKPV), 563–612 (LSRV…DIPM), 629–651 (DKEE…KNAL), 1007–1032 (DKEK…KNSS), and 1070–1096 (FKKK…TQNA). Short sequence motifs (nuclear localization signal) lie at residues 170 to 177 (SRKLVSPE) and 281 to 288 (IRKEESAL). A compositionally biased stretch (basic and acidic residues) spans 281–294 (IRKEESALKKESVR). The segment covering 315–337 (GATSENASKSCDSDQGNSESTDS) has biased composition (polar residues). Residues 337–617 (SGFDRTPFKG…DDIPMEIVEL (281 aa)) are DNA-binding. Residues 371–381 (GIKEHDADPSK) are compositionally biased toward basic and acidic residues. Residues 382–394 (RSTPAHSLFTGND) show a composition bias toward polar residues. Over residues 572 to 601 (SGADRKGKTVMVQEHHGAPRSQSHDRKETT) the composition is skewed to basic and acidic residues. The segment at 866-1096 (LDPRLRSTTP…KPVCPPTQNA (231 aa)) is DNA-binding. The span at 1018–1032 (SCNNNASAGPVKNSS) shows a compositional bias: polar residues. A Nuclear localization signal 3 motif is present at residues 1071-1078 (KKKPAVCK).

In terms of assembly, interacts with MSI1. In terms of tissue distribution, expressed in mature embryo, root tips, cotyledons, leaves, stems, shoot apex, and flower clusters, with highest levels in flowers. The presence in the shoot apical meristem (SAM) is required to maintain vegetative development and prevent early flowering.

The protein localises to the nucleus. In terms of biological role, transcription repressor that regulates phase transition during shoot, flower and seeds development. Controls leaves development, shoot architecture and flowering by delaying both the vegetative to reproductive transition and flower initiation. Participates in polycomb group (PcG) protein complex-mediated (including EMF2) silencing of the flower homeotic genes AGAMOUS (AG), PISTILLATA (PI), and APETALA3 (AP3), as well as of some regulatory genes such as ABSCISIC ACID INSENSITIVE3 (ABI3), LONG VEGETATIVE PHASE1 (LOV1), and FLOWERING LOCUS C (FLC) during vegetative development. Required for histone methylation or for maintaining a stable histone methylation (e.g. H3K27me3) pattern of repressed target genes (including genes involved in salt stress response and flower development); this repression is counteracted by ULT1. Can bind non specifically DNA (both double- and single-stranded) and RNA. This chain is Protein EMBRYONIC FLOWER 1, found in Arabidopsis thaliana (Mouse-ear cress).